The following is a 346-amino-acid chain: Probable alpha-1,2-galactosyltransferase gmh2 (346 aa).

The Cytoplasmic segment spans residues 1 to 11 (MALMLSRIPRR). A helical; Signal-anchor for type II membrane protein membrane pass occupies residues 12–32 (FFFLFLTVGLIAGAFLYSLIY). At 33–346 (FVDVDLVSKV…LWQKFYALID (314 aa)) the chain is on the lumenal side. N-linked (GlcNAc...) asparagine glycans are attached at residues Asn-64, Asn-142, and Asn-224.

This sequence belongs to the glycosyltransferase 34 family.

Its subcellular location is the golgi apparatus membrane. This chain is Probable alpha-1,2-galactosyltransferase gmh2 (gmh2), found in Schizosaccharomyces pombe (strain 972 / ATCC 24843) (Fission yeast).